The primary structure comprises 160 residues: Phosphopantetheine adenylyltransferase (160 aa).

This sequence belongs to the eukaryotic CoaD family.

It is found in the cytoplasm. It catalyses the reaction (R)-4'-phosphopantetheine + ATP + H(+) = 3'-dephospho-CoA + diphosphate. Its pathway is cofactor biosynthesis; coenzyme A biosynthesis. In terms of biological role, reversibly transfers an adenylyl group from ATP to 4'-phosphopantetheine, yielding dephospho-CoA (dPCoA) and pyrophosphate. The sequence is that of Phosphopantetheine adenylyltransferase from Pyrococcus furiosus (strain ATCC 43587 / DSM 3638 / JCM 8422 / Vc1).